The following is a 507-amino-acid chain: GMP synthase [glutamine-hydrolyzing] 1 (507 aa).

One can recognise a Glutamine amidotransferase type-1 domain in the interval 4–193 (KIIILDFGSQ…VVDVCGCKQD (190 aa)). The active-site Nucleophile is Cys79. Catalysis depends on residues His167 and Glu169. One can recognise a GMPS ATP-PPase domain in the interval 194–382 (WSPASFIEST…LGMPEHLITR (189 aa)). 221–227 (SGGVDSS) contacts ATP.

In terms of assembly, homodimer.

It catalyses the reaction XMP + L-glutamine + ATP + H2O = GMP + L-glutamate + AMP + diphosphate + 2 H(+). It functions in the pathway purine metabolism; GMP biosynthesis; GMP from XMP (L-Gln route): step 1/1. In terms of biological role, catalyzes the synthesis of GMP from XMP. This Bacteroides thetaiotaomicron (strain ATCC 29148 / DSM 2079 / JCM 5827 / CCUG 10774 / NCTC 10582 / VPI-5482 / E50) protein is GMP synthase [glutamine-hydrolyzing] 1 (guaA1).